Consider the following 733-residue polypeptide: E3 ubiquitin-protein ligase COP1 (733 aa).

Positions 1–43 (MSGSRQAGSGSAGTSPGSSAASSVTSASSSLSSSPSPPSVAAS) are disordered. The Nuclear localization signal 1 motif lies at 111 to 115 (SSRKR). An RING-type zinc finger spans residues 138 to 176 (CPICFDMIEEAYMTKCGHSFCYKCIHQSLEDNNRCPKCN). Residues 197 to 208 (KQKQRFEEKRFK) carry the Nuclear localization signal 2 motif. The stretch at 231-306 (DQDNLDLANV…RVEEMSGLYS (76 aa)) forms a coiled coil. Residues 237–247 (LANVNLMLELL) carry the Nuclear export signal motif. The tract at residues 307-327 (PVSEDSTVPQFEAPSPSHSSI) is disordered. WD repeat units lie at residues 421-460 (NGSS…QDAV), 470-510 (TCNS…RSKV), 513-553 (EHEK…SVAS), 555-595 (EAKA…QPIM), 599-637 (GHRK…CLRS), 640-679 (GHIN…TLLT), and 695-731 (EDDT…KVLE). An interaction with TRIB1 region spans residues 645 to 647 (KNF).

It belongs to the COP1 family. As to quaternary structure, homodimer. Homodimerization is mediated by the coiled coil domain. Component of the DCX DET1-COP1 ubiquitin ligase complex at least composed of RBX1, DET1, DDB1, CUL4A and COP1. Isoform 2 does not interact with CUL4A but still binds to RBX1, suggesting that the interaction may be mediated by another cullin protein. Isoform 1 and isoform 2 interact with CUL5 but not with CUL1, CUL2 not CUL3. Interacts with bZIP transcription factors JUN, JUNB and JUND but not with FOS, ATF2 nor XBP1. Interacts with p53 (TP53). Interacts with COPS6; this interaction stabilizes RFWD2 through reducing its auto-ubiquitination and decelerating its turnover rate. Interacts with SFN; this interaction leads to SFN degradation. Interacts with p53/TP53 and MTA1. Interacts with TRIB1 (via C-terminus) and TRIB2.

The protein resides in the nucleus speckle. The protein localises to the cytoplasm. It catalyses the reaction S-ubiquitinyl-[E2 ubiquitin-conjugating enzyme]-L-cysteine + [acceptor protein]-L-lysine = [E2 ubiquitin-conjugating enzyme]-L-cysteine + N(6)-ubiquitinyl-[acceptor protein]-L-lysine.. Its pathway is protein modification; protein ubiquitination. TRIB1 competes with substrates for RFWD2 binding. Its function is as follows. E3 ubiquitin-protein ligase that mediates ubiquitination and subsequent proteasomal degradation of target proteins. E3 ubiquitin ligases accept ubiquitin from an E2 ubiquitin-conjugating enzyme in the form of a thioester and then directly transfers the ubiquitin to targeted substrates. Involved in JUN ubiquitination and degradation. Directly involved in p53 (TP53) ubiquitination and degradation, thereby abolishing p53-dependent transcription and apoptosis. Ubiquitinates p53 independently of MDM2 or RCHY1. Probably mediates E3 ubiquitin ligase activity by functioning as the essential RING domain subunit of larger E3 complexes. In contrast, it does not constitute the catalytic RING subunit in the DCX DET1-COP1 complex that negatively regulates JUN, the ubiquitin ligase activity being mediated by RBX1. Involved in 14-3-3 protein sigma/SFN ubiquitination and proteasomal degradation, leading to AKT activation and promotion of cell survival. Ubiquitinates MTA1 leading to its proteasomal degradation. Upon binding to TRIB1, ubiquitinates CEBPA, which lacks a canonical COP1-binding motif. This chain is E3 ubiquitin-protein ligase COP1, found in Mus musculus (Mouse).